Reading from the N-terminus, the 209-residue chain is CASP-like protein 1B1 (209 aa).

The segment covering 1 to 10 has biased composition (basic and acidic residues); sequence MDLERGDKKP. The interval 1–39 is disordered; the sequence is MDLERGDKKPPPPPPPAPRTAAATTTTTTTPACSGKKRP. Over 1 to 49 the chain is Cytoplasmic; sequence MDLERGDKKPPPPPPPAPRTAAATTTTTTTPACSGKKRPPLRDSLVALQ. A compositionally biased stretch (low complexity) spans 19–32; that stretch reads RTAAATTTTTTTPA. The chain crosses the membrane as a helical span at residues 50 to 70; that stretch reads PVLLRAAAALAAAAAAAVMAL. The Extracellular portion of the chain corresponds to 71 to 100; that stretch reads DAQSYTAVVAIVGTRPLTQTFTAKFSDTPA. A helical membrane pass occupies residues 101–121; it reads FVYFVIANAIAAAYNLLVLLV. Residues 122-134 are Cytoplasmic-facing; that stretch reads RRRRRTTAGLVVR. The helical transmembrane segment at 135-155 threads the bilayer; the sequence is MLDMVVMALLATGAAAAASMA. The Extracellular portion of the chain corresponds to 156 to 180; it reads ELGRNGNARARWNPVCDRFGSFCRR. Residues 181-201 traverse the membrane as a helical segment; that stretch reads GGAALAASFVGVALMLALNLL. The Cytoplasmic portion of the chain corresponds to 202–209; the sequence is SAASGAGC.

It belongs to the Casparian strip membrane proteins (CASP) family. As to quaternary structure, homodimer and heterodimers.

It localises to the cell membrane. The chain is CASP-like protein 1B1 from Zea mays (Maize).